A 102-amino-acid polypeptide reads, in one-letter code: Small ribosomal subunit protein uS10 (102 aa).

The protein belongs to the universal ribosomal protein uS10 family. As to quaternary structure, part of the 30S ribosomal subunit.

Functionally, involved in the binding of tRNA to the ribosomes. The polypeptide is Small ribosomal subunit protein uS10 (Staphylococcus haemolyticus (strain JCSC1435)).